A 132-amino-acid chain; its full sequence is Transcription antitermination protein NusB (132 aa).

The protein belongs to the NusB family.

Functionally, involved in transcription antitermination. Required for transcription of ribosomal RNA (rRNA) genes. Binds specifically to the boxA antiterminator sequence of the ribosomal RNA (rrn) operons. The polypeptide is Transcription antitermination protein NusB (Lachnoclostridium phytofermentans (strain ATCC 700394 / DSM 18823 / ISDg) (Clostridium phytofermentans)).